A 140-amino-acid polypeptide reads, in one-letter code: Cysteine desulfuration protein SufE (140 aa).

The active-site Cysteine persulfide intermediate is cysteine 51.

This sequence belongs to the SufE family. As to quaternary structure, homodimer. Interacts with SufS.

It is found in the cytoplasm. The protein operates within cofactor biosynthesis; iron-sulfur cluster biosynthesis. In terms of biological role, participates in cysteine desulfuration mediated by SufS. Cysteine desulfuration mobilizes sulfur from L-cysteine to yield L-alanine and constitutes an essential step in sulfur metabolism for biosynthesis of a variety of sulfur-containing biomolecules. Functions as a sulfur acceptor for SufS, by mediating the direct transfer of the sulfur atom from the S-sulfanylcysteine of SufS, an intermediate product of cysteine desulfuration process. The polypeptide is Cysteine desulfuration protein SufE (Yersinia pestis bv. Antiqua (strain Antiqua)).